A 327-amino-acid chain; its full sequence is Phospho-N-acetylmuramoyl-pentapeptide-transferase (327 aa).

Transmembrane regions (helical) follow at residues 3–23, 51–71, 75–95, 115–135, 140–160, 172–192, 197–217, 223–243, 248–268, and 306–326; these read IALIAGIVTFILTIIGIPAFI, TMGGTVFLLTSVLASFVIGLF, LSNGLIMILFILVLYGVVGFL, LFLQLVGGVVFYFFYNQHGAG, IFTVPVQLGFLYVFFVLFWLI, IDGLASISVVISLVAYAVIAV, FDILIVIISMIGGLLGFFVFN, IFMGDVGSLALGGMLAAISIS, WTLLLIGIVYVFETTSVMMQV, and VDFFFWGIGIVGSLLTLAILY.

The protein belongs to the glycosyltransferase 4 family. MraY subfamily. Mg(2+) is required as a cofactor.

The protein resides in the cell membrane. The catalysed reaction is UDP-N-acetyl-alpha-D-muramoyl-L-alanyl-gamma-D-glutamyl-L-lysyl-D-alanyl-D-alanine + di-trans,octa-cis-undecaprenyl phosphate = Mur2Ac(oyl-L-Ala-gamma-D-Glu-L-Lys-D-Ala-D-Ala)-di-trans,octa-cis-undecaprenyl diphosphate + UMP. The protein operates within cell wall biogenesis; peptidoglycan biosynthesis. Its function is as follows. Catalyzes the initial step of the lipid cycle reactions in the biosynthesis of the cell wall peptidoglycan: transfers peptidoglycan precursor phospho-MurNAc-pentapeptide from UDP-MurNAc-pentapeptide onto the lipid carrier undecaprenyl phosphate, yielding undecaprenyl-pyrophosphoryl-MurNAc-pentapeptide, known as lipid I. The protein is Phospho-N-acetylmuramoyl-pentapeptide-transferase of Streptococcus sanguinis (strain SK36).